Reading from the N-terminus, the 501-residue chain is Lysine--tRNA ligase (501 aa).

Mg(2+)-binding residues include Glu404 and Glu411.

This sequence belongs to the class-II aminoacyl-tRNA synthetase family. As to quaternary structure, homodimer. It depends on Mg(2+) as a cofactor.

The protein resides in the cytoplasm. The enzyme catalyses tRNA(Lys) + L-lysine + ATP = L-lysyl-tRNA(Lys) + AMP + diphosphate. The sequence is that of Lysine--tRNA ligase (lysS) from Campylobacter jejuni subsp. jejuni serotype O:2 (strain ATCC 700819 / NCTC 11168).